The chain runs to 53 residues: Lupus La protein homolog (53 aa).

The segment covering 1-13 has biased composition (basic and acidic residues); the sequence is GKVEFQGKKTKFD. A disordered region spans residues 1–53; the sequence is GKVEFQGKKTKFDSDDERNENGAAGPVKRAREETDKEEPASKQQKTENGAGDQ. Lys-8 carries the post-translational modification N6-acetyllysine. Thr-10 is modified (phosphothreonine). The residue at position 14 (Ser-14) is a Phosphoserine. Basic and acidic residues predominate over residues 29 to 40; it reads RAREETDKEEPA.

As to quaternary structure, interacts with DDX15. May interact with RUFY1. Phosphorylated.

The protein localises to the nucleus. Functionally, binds to the 3' poly(U) terminus of nascent RNA polymerase III transcripts, protecting them from exonuclease digestion and facilitating their folding and maturation. In Oryctolagus cuniculus (Rabbit), this protein is Lupus La protein homolog (SSB).